The sequence spans 659 residues: Siderophore transporter fer7 (659 aa).

The segment at 1–62 (MSNQAQDQPE…ADASSAREGQ (62 aa)) is disordered. Residues 31-41 (QSVSAHGNTSL) show a composition bias toward polar residues. N38 carries an N-linked (GlcNAc...) asparagine glycan. A compositionally biased stretch (basic and acidic residues) spans 42 to 54 (NKKDRVSAVRDAD). 8 helical membrane passes run 79–99 (NSPIVYTVYASLAAVTICFAL), 121–141 (LFGVIATVEAILNAVSKPFIA), 150–170 (QTAYFLVAVFYTIGFVVVASA), 208–228 (GVVTALTSSPFIVLPWVGNLI), 245–265 (GMFAIMAPVCVAPIILVLMYV), 316–336 (LVGLFLLALSFSLLLVPFSIY), 348–368 (IIAMFVCGGVILGMFLAWEIL), and 379–399 (VWYNRTFLLAVTIDIFYFMGG). N415 is a glycosylation site (N-linked (GlcNAc...) asparagine). 2 helical membrane passes run 424–444 (VVNALATCALSVFGLAAGFYL) and 451–471 (KFLQIGGLVIRIVAMGLYLYG). N475 is a glycosylation site (N-linked (GlcNAc...) asparagine). 3 helical membrane passes run 478-498 (TMVVAWSQILNSLGGACSVVG), 528-548 (AIGSAIAAGIWTGTLPDYLAA), and 590-610 (PIFIVALVLAFIPLFAGLLMP).

This sequence belongs to the major facilitator superfamily.

The protein localises to the membrane. Its function is as follows. Siderophore transporter; part of the gene cluster that mediates the biosynthesis of siderophore ferrichrome A which is contributing to organismal virulence. This chain is Siderophore transporter fer7, found in Mycosarcoma maydis (Corn smut fungus).